We begin with the raw amino-acid sequence, 67 residues long: Large ribosomal subunit protein bL32 (67 aa).

Residues 1-19 show a composition bias toward basic residues; the sequence is MAVPKRKMSRSNTRARRSQ. A disordered region spans residues 1 to 21; that stretch reads MAVPKRKMSRSNTRARRSQWK.

It belongs to the bacterial ribosomal protein bL32 family.

This Clavibacter michiganensis subsp. michiganensis (strain NCPPB 382) protein is Large ribosomal subunit protein bL32.